The sequence spans 258 residues: Imidazole glycerol phosphate synthase subunit HisF (258 aa).

Active-site residues include Asp11 and Asp130.

This sequence belongs to the HisA/HisF family. In terms of assembly, heterodimer of HisH and HisF.

It localises to the cytoplasm. The catalysed reaction is 5-[(5-phospho-1-deoxy-D-ribulos-1-ylimino)methylamino]-1-(5-phospho-beta-D-ribosyl)imidazole-4-carboxamide + L-glutamine = D-erythro-1-(imidazol-4-yl)glycerol 3-phosphate + 5-amino-1-(5-phospho-beta-D-ribosyl)imidazole-4-carboxamide + L-glutamate + H(+). It functions in the pathway amino-acid biosynthesis; L-histidine biosynthesis; L-histidine from 5-phospho-alpha-D-ribose 1-diphosphate: step 5/9. IGPS catalyzes the conversion of PRFAR and glutamine to IGP, AICAR and glutamate. The HisF subunit catalyzes the cyclization activity that produces IGP and AICAR from PRFAR using the ammonia provided by the HisH subunit. The sequence is that of Imidazole glycerol phosphate synthase subunit HisF from Escherichia coli O7:K1 (strain IAI39 / ExPEC).